The primary structure comprises 180 residues: Probable RNA 2'-phosphotransferase (180 aa).

It belongs to the KptA/TPT1 family.

In terms of biological role, removes the 2'-phosphate from RNA via an intermediate in which the phosphate is ADP-ribosylated by NAD followed by a presumed transesterification to release the RNA and generate ADP-ribose 1''-2''-cyclic phosphate (APPR&gt;P). May function as an ADP-ribosylase. This is Probable RNA 2'-phosphotransferase from Thermococcus kodakarensis (strain ATCC BAA-918 / JCM 12380 / KOD1) (Pyrococcus kodakaraensis (strain KOD1)).